The chain runs to 319 residues: Cytochrome f (319 aa).

Residues 1–34 (MQNRNTYEWAKKMTRLISVLVMIHIITRTSISNA) form the signal peptide. Heme is bound by residues Tyr-35, Cys-55, Cys-58, and His-59. A helical membrane pass occupies residues 287-304 (GLLLFLASVILAQIFLVL).

Belongs to the cytochrome f family. As to quaternary structure, the 4 large subunits of the cytochrome b6-f complex are cytochrome b6, subunit IV (17 kDa polypeptide, petD), cytochrome f and the Rieske protein, while the 4 small subunits are PetG, PetL, PetM and PetN. The complex functions as a dimer. Heme is required as a cofactor.

Its subcellular location is the plastid. It is found in the chloroplast thylakoid membrane. Its function is as follows. Component of the cytochrome b6-f complex, which mediates electron transfer between photosystem II (PSII) and photosystem I (PSI), cyclic electron flow around PSI, and state transitions. This chain is Cytochrome f (petA), found in Pinus thunbergii (Japanese black pine).